Consider the following 302-residue polypeptide: MQDLLNQILDEVRPLIGQGQVANYIPALADVPANQLGIAVYGNDGQVFSAGDADTPFSVQSISKVFSLVQAIGHSGEAIWERLGHEPSGQPFNSLVQLEFERGRPRNPFINAGALVICDINQSRFAAPALSMRDFVRRLSGNLQVMVDGRVAESEYQHRARNAAMAYLMQSFGNFHNDVEAVLRSYFSHCALRMSCVDLARAFCFLANDGFCKHSGEQILTRRQTQQVNSIMATSGLYDEAGNFAYRVGLPGKSGVGGGIVAVVPGQFTVCVWSPELNSAGNSLVGMAALELLSQRIGWSVF.

7 residues coordinate substrate: Ser61, Asn111, Glu155, Asn162, Tyr186, Tyr238, and Val256.

The protein belongs to the glutaminase family. In terms of assembly, homotetramer.

It catalyses the reaction L-glutamine + H2O = L-glutamate + NH4(+). The sequence is that of Glutaminase from Pseudomonas fluorescens (strain ATCC BAA-477 / NRRL B-23932 / Pf-5).